A 521-amino-acid polypeptide reads, in one-letter code: Zinc finger CCCH domain-containing protein 45 (521 aa).

Disordered regions lie at residues 28-60 (TEDSPANVASQPQRHSYPSRKPRGPDLPPGFEG), 142-185 (TPAI…PLCS), and 296-319 (SRSFTNPERRVSPPKPVNGSISPP). Over residues 34-43 (NVASQPQRHS) the composition is skewed to polar residues. A compositionally biased stretch (low complexity) spans 159 to 168 (EESSNSKVES). The span at 170–185 (VTANKQGQLETKPLCS) shows a compositional bias: polar residues. Residues 469–497 (NKIHQQCIYFGTANGCNMGDSCTYVHDRY) form a C3H1-type zinc finger.

In Arabidopsis thaliana (Mouse-ear cress), this protein is Zinc finger CCCH domain-containing protein 45.